Reading from the N-terminus, the 148-residue chain is Deoxyuridine 5'-triphosphate nucleotidohydrolase (148 aa).

Substrate is bound by residues 67-69 (RSG), Asn80, 84-86 (LID), and Met94.

It belongs to the dUTPase family. Mg(2+) is required as a cofactor.

It carries out the reaction dUTP + H2O = dUMP + diphosphate + H(+). It functions in the pathway pyrimidine metabolism; dUMP biosynthesis; dUMP from dCTP (dUTP route): step 2/2. This enzyme is involved in nucleotide metabolism: it produces dUMP, the immediate precursor of thymidine nucleotides and it decreases the intracellular concentration of dUTP so that uracil cannot be incorporated into DNA. This chain is Deoxyuridine 5'-triphosphate nucleotidohydrolase, found in Francisella tularensis subsp. tularensis (strain FSC 198).